The following is a 744-amino-acid chain: Tripartite motif-containing protein 3 (744 aa).

The residue at position 2 (Ala-2) is an N-acetylalanine. Residues 2 to 290 (AKREDSPGPE…LAAQAFPERP (289 aa)) form an interaction with KIF21B region. A Phosphoserine modification is found at Ser-7. The segment at 22–63 (CSICLDRYRCPKVLPCLHTFCERCLQNYIPPQSLTLSCPVCR) adopts an RING-type zinc-finger fold. The B box-type zinc finger occupies 110–151 (GRPLSCPNHEGKTMEFYCEACETAMCGECRAGEHREHGTVLL). Zn(2+) contacts are provided by Cys-115, His-118, Cys-138, and His-143. Positions 153–224 (DVVEQHKAAL…RKQALVSDLE (72 aa)) form a coiled coil. The stretch at 317–418 (TTSATAHETV…VRGSPFRVRA (102 aa)) is one Filamin repeat. The interval 419–464 (LRPGDLPPSPDDVKRRVKSPGGPGSHVRQKAVRRPSSMYSTGGKRK) is disordered. Phosphoserine is present on Ser-427. NHL repeat units lie at residues 473–516 (VFRV…FSNE), 520–563 (KFRF…FSPE), 564–605 (GKFK…FQPN), 609–652 (VGRF…YSAD), 656–699 (LFKF…FDSS), and 700–743 (GSFL…YRYL).

It belongs to the TRIM/RBCC family. Forms homooligomers. Interacts with TRIM2; this interaction reduces TRIM2 activity. Associates with myosin-Vb (MYO5B) and alpha-actinin-4 (ACTN4). Component of the CART complex, at least composed of ACTN4, HGS/HRS, MYO5B and TRIM3. Interacts with ZFYVE28/LST2. Interacts with KIF21B.

The protein resides in the cytoplasm. It localises to the early endosome. Its subcellular location is the golgi apparatus. The protein localises to the trans-Golgi network. It is found in the cell projection. The protein resides in the dendrite. The enzyme catalyses S-ubiquitinyl-[E2 ubiquitin-conjugating enzyme]-L-cysteine + [acceptor protein]-L-lysine = [E2 ubiquitin-conjugating enzyme]-L-cysteine + N(6)-ubiquitinyl-[acceptor protein]-L-lysine.. In terms of biological role, E3 ubiquitin ligase that plays essential roles in neuronal functions such as regulation of neuronal plasticity, learning, and memory. In addition to its neuronal functions, participates in other biological processes such as innate immunity or cell cycle regulation. Component of the cytoskeleton-associated recycling or transport complex in neurons, polyubiquitinates gamma-actin, thus regulating neuronal plasticity, learning, and memory. Ubiquitinates postsynaptic scaffold GKAP, a neuronal substrate involved in synaptic remodeling and thereby modulates dendritic spine morphology. Positively regulates motility of microtubule-dependent motor protein KIF21B. Induces growth arrest via its RING-dependent E3 ligase activity and ubiquinates CDKN1A. Positively regulates TLR3-mediated signaling by mediating 'Lys-63'-linked polyubiquitination of TLR3. In turn, promotes the recognition and sorting of polyubiquitinated TLR3 by the ESCRT complexes. The sequence is that of Tripartite motif-containing protein 3 (Trim3) from Mus musculus (Mouse).